Reading from the N-terminus, the 313-residue chain is Ribosomal protein L11 methyltransferase (313 aa).

Positions 163, 184, 206, and 249 each coordinate S-adenosyl-L-methionine.

The protein belongs to the methyltransferase superfamily. PrmA family.

Its subcellular location is the cytoplasm. It carries out the reaction L-lysyl-[protein] + 3 S-adenosyl-L-methionine = N(6),N(6),N(6)-trimethyl-L-lysyl-[protein] + 3 S-adenosyl-L-homocysteine + 3 H(+). Its function is as follows. Methylates ribosomal protein L11. This is Ribosomal protein L11 methyltransferase from Brevibacillus brevis (strain 47 / JCM 6285 / NBRC 100599).